The following is a 170-amino-acid chain: Adenine phosphoribosyltransferase (170 aa).

It belongs to the purine/pyrimidine phosphoribosyltransferase family. As to quaternary structure, homodimer.

Its subcellular location is the cytoplasm. It carries out the reaction AMP + diphosphate = 5-phospho-alpha-D-ribose 1-diphosphate + adenine. Its pathway is purine metabolism; AMP biosynthesis via salvage pathway; AMP from adenine: step 1/1. Its function is as follows. Catalyzes a salvage reaction resulting in the formation of AMP, that is energically less costly than de novo synthesis. The protein is Adenine phosphoribosyltransferase of Bacillus licheniformis (strain ATCC 14580 / DSM 13 / JCM 2505 / CCUG 7422 / NBRC 12200 / NCIMB 9375 / NCTC 10341 / NRRL NRS-1264 / Gibson 46).